The chain runs to 252 residues: 4-formylbenzenesulfonate dehydrogenase TsaC1/TsaC2 (252 aa).

NAD(+)-binding positions include 9–36 (IVTGGASGFGAAIARRLSQAGAAVLVAD) and aspartate 62. Residue serine 142 coordinates substrate. Tyrosine 155 (proton acceptor) is an active-site residue. Lysine 159 serves as a coordination point for NAD(+).

It belongs to the short-chain dehydrogenases/reductases (SDR) family. In terms of assembly, homodimer.

It catalyses the reaction 4-formylbenzenesulfonate + NAD(+) + H2O = 4-sulfobenzoate + NADH + 2 H(+). Functionally, involved in the toluene-4-sulfonate degradation pathway. Does not discriminate between the sulfonate and the carboxyl substituents and can also be involved in the p-toluenecarboxylate degradation pathway. This chain is 4-formylbenzenesulfonate dehydrogenase TsaC1/TsaC2 (tsaC1), found in Comamonas testosteroni (Pseudomonas testosteroni).